The following is a 336-amino-acid chain: Dihydroorotate dehydrogenase (quinone) (336 aa).

FMN-binding positions include A62 to K66 and T86. Residue K66 coordinates substrate. Position 111–115 (N111–F115) interacts with substrate. FMN is bound by residues N139 and N172. N172 serves as a coordination point for substrate. The active-site Nucleophile is the S175. N177 is a substrate binding site. 2 residues coordinate FMN: K217 and T245. Substrate is bound at residue N246–T247. FMN is bound by residues G268, G297, and Y318–S319.

Belongs to the dihydroorotate dehydrogenase family. Type 2 subfamily. As to quaternary structure, monomer. FMN is required as a cofactor.

It is found in the cell membrane. The catalysed reaction is (S)-dihydroorotate + a quinone = orotate + a quinol. It functions in the pathway pyrimidine metabolism; UMP biosynthesis via de novo pathway; orotate from (S)-dihydroorotate (quinone route): step 1/1. Its function is as follows. Catalyzes the conversion of dihydroorotate to orotate with quinone as electron acceptor. The chain is Dihydroorotate dehydrogenase (quinone) from Klebsiella pneumoniae (strain 342).